Here is a 339-residue protein sequence, read N- to C-terminus: Ectoine/5-hydroxyectoine-binding periplasmic protein UehA (339 aa).

The signal sequence occupies residues M1–A20. The L-ectoine site is built by E36, R171, N211, F215, and F236. C162 and C303 are oxidised to a cystine.

This sequence belongs to the bacterial solute-binding protein 7 family. As to quaternary structure, monomer. The complex comprises the extracytoplasmic solute receptor protein UehA, and the two transmembrane proteins UehB and UehC.

It localises to the periplasm. In terms of biological role, part of the tripartite ATP-independent periplasmic (TRAP) transport system UehABC, which imports both ectoine and 5-hydroxyectoine as nutrients, and not as osmoprotectants. UehA binds both ectoine and 5-hydroxyectoine with high specificity and affinity. The sequence is that of Ectoine/5-hydroxyectoine-binding periplasmic protein UehA from Ruegeria pomeroyi (strain ATCC 700808 / DSM 15171 / DSS-3) (Silicibacter pomeroyi).